A 683-amino-acid polypeptide reads, in one-letter code: Dixin (683 aa).

Leu2 carries the N-myristoyl glycine lipid modification. Residues 20–127 form the Calponin-homology (CH) domain; the sequence is EQQLQAYVAW…LVLALAAHFK (108 aa). An actin-binding region spans residues 127-300; the sequence is KPGSSRTVNQ…LEKEMEEAKK (174 aa). A Phosphoserine modification is found at Ser186. A disordered region spans residues 207–235; that stretch reads GQQRSPSESSCSSLTSPSPIHSAKSESII. Residues 211–228 show a composition bias toward low complexity; it reads SPSESSCSSLTSPSPIHS. A Phosphoserine modification is found at Ser231. Residues 279 to 452 adopt a coiled-coil conformation; the sequence is SWEEQLLEQQ…EALRKLSDVS (174 aa). Residues 482-492 show a composition bias toward polar residues; the sequence is NYNSHNSQSNG. Disordered regions lie at residues 482–509 and 556–594; these read NYNSHNSQSNGFLLPTAGKGATSVSNRG and TQKKQERKVRVKSPRTQVGSEYRESWPPNSKLPHSQSSP. Residue Ser590 is modified to Phosphoserine. The 81-residue stretch at 600–680 folds into the DIX domain; sequence CTKVLYFTDR…KIVAWVEEDH (81 aa).

Belongs to the DIXDC1 family. As to quaternary structure, isoform 1 but not isoform 2 binds filamentous actin. Interacts with the complex composed of DVL2 and Rac. Interacts with AXIN1; competes with MAP3K1. Interacts with MAP3K4 preventing MAP3K4 interaction with AXIN1. Directly interacts (via DIX domain) with DVL2 (via DIX domain). Interacts with gamma-tubulin. Phosphorylated on tyrosine and serine residues. In terms of processing, polyubiquitinated, leading to its proteasomal degradation. WNT3A signaling increases DIXDC1 protein levels by inhibiting its ubiquitination and subsequent degradation. In terms of tissue distribution, ubiquitously expressed with higher expression in cardiac and skeletal muscles.

Its subcellular location is the cell junction. The protein localises to the focal adhesion. The protein resides in the cytoplasm. It is found in the cytoskeleton. It localises to the stress fiber. Functionally, positive effector of the Wnt signaling pathway; activates WNT3A signaling via DVL2. Regulates JNK activation by AXIN1 and DVL2. The protein is Dixin (DIXDC1) of Homo sapiens (Human).